Reading from the N-terminus, the 335-residue chain is Glyceraldehyde-3-phosphate dehydrogenase 1 (335 aa).

NAD(+) is bound by residues 13-14 and Gly-111; that span reads TI. 140–142 provides a ligand contact to D-glyceraldehyde 3-phosphate; the sequence is SCN. Catalysis depends on Cys-141, which acts as the Nucleophile. Arg-169 contacts NAD(+). D-glyceraldehyde 3-phosphate is bound by residues Thr-171 and 195–196; that span reads HG. Gln-300 is an NAD(+) binding site.

It belongs to the glyceraldehyde-3-phosphate dehydrogenase family. Homotetramer.

It is found in the cytoplasm. It carries out the reaction D-glyceraldehyde 3-phosphate + phosphate + NADP(+) = (2R)-3-phospho-glyceroyl phosphate + NADPH + H(+). The catalysed reaction is D-glyceraldehyde 3-phosphate + phosphate + NAD(+) = (2R)-3-phospho-glyceroyl phosphate + NADH + H(+). The protein operates within carbohydrate degradation; glycolysis; pyruvate from D-glyceraldehyde 3-phosphate: step 1/5. This chain is Glyceraldehyde-3-phosphate dehydrogenase 1 (gapA), found in Methanosarcina acetivorans (strain ATCC 35395 / DSM 2834 / JCM 12185 / C2A).